The primary structure comprises 198 residues: Large ribosomal subunit protein bL12m (198 aa).

The transit peptide at 1–36 (MLPSATSLLRGPCLGLRAAALRLVRQQVPHVCAVRL) directs the protein to the mitochondrion. Over residues 106 to 115 (GAAPAPTAPE) the composition is skewed to low complexity. Positions 106–126 (GAAPAPTAPEAAEEDVPKQKE) are disordered. N6-acetyllysine is present on residues Lys125, Lys138, Lys142, and Lys144. The residue at position 150 (Lys150) is an N6-acetyllysine; alternate. Residue Lys150 is modified to N6-succinyllysine; alternate. Lys150 is covalently cross-linked (Glycyl lysine isopeptide (Lys-Gly) (interchain with G-Cter in ubiquitin)). Residue Lys162 is modified to N6-succinyllysine. Lys163 and Lys173 each carry N6-acetyllysine. Lys178 carries the N6-acetyllysine; alternate modification. Residue Lys178 is modified to N6-succinyllysine; alternate. Lys185 is modified (N6-acetyllysine).

It belongs to the bacterial ribosomal protein bL12 family. In terms of assembly, component of the mitochondrial ribosome large subunit (39S) which comprises a 16S rRNA and about 50 distinct proteins. Interacts with NOA1. Two mature forms are produced by differential two-step proteolytic cleavage. Cleaved by the mitochondrial processing protease to produce the long mature form and subsequently by the mitochondrial intermediate protease to produce the short mature form. Post-translationally, in the presence of CUL3, undergoes 'Lys-63'-linked ubiquitination at Lys-150 which results in proteasomal degradation.

It localises to the mitochondrion matrix. Functionally, as a component of the mitochondrial large ribosomal subunit, plays a role in mitochondrial translation. When present in mitochondria as a free protein not associated with the ribosome, associates with mitochondrial RNA polymerase POLRMT to activate transcription. Required for POLRMT stability. The sequence is that of Large ribosomal subunit protein bL12m (MRPL12) from Bos taurus (Bovine).